The chain runs to 94 residues: Pyrimidine/purine nucleoside phosphorylase (94 aa).

This sequence belongs to the nucleoside phosphorylase PpnP family.

The enzyme catalyses a purine D-ribonucleoside + phosphate = a purine nucleobase + alpha-D-ribose 1-phosphate. It carries out the reaction adenosine + phosphate = alpha-D-ribose 1-phosphate + adenine. The catalysed reaction is cytidine + phosphate = cytosine + alpha-D-ribose 1-phosphate. It catalyses the reaction guanosine + phosphate = alpha-D-ribose 1-phosphate + guanine. The enzyme catalyses inosine + phosphate = alpha-D-ribose 1-phosphate + hypoxanthine. It carries out the reaction thymidine + phosphate = 2-deoxy-alpha-D-ribose 1-phosphate + thymine. The catalysed reaction is uridine + phosphate = alpha-D-ribose 1-phosphate + uracil. It catalyses the reaction xanthosine + phosphate = alpha-D-ribose 1-phosphate + xanthine. Functionally, catalyzes the phosphorolysis of diverse nucleosides, yielding D-ribose 1-phosphate and the respective free bases. Can use uridine, adenosine, guanosine, cytidine, thymidine, inosine and xanthosine as substrates. Also catalyzes the reverse reactions. In Pseudomonas putida (strain GB-1), this protein is Pyrimidine/purine nucleoside phosphorylase.